A 321-amino-acid polypeptide reads, in one-letter code: Citrate synthase (321 aa).

Catalysis depends on residues His-248 and Asp-306.

It belongs to the citrate synthase family.

The enzyme catalyses oxaloacetate + acetyl-CoA + H2O = citrate + CoA + H(+). It functions in the pathway carbohydrate metabolism; tricarboxylic acid cycle; isocitrate from oxaloacetate: step 1/2. The chain is Citrate synthase (gltA) from Bartonella elizabethae (Rochalimaea elizabethae).